The following is a 136-amino-acid chain: Probable glycine cleavage system H protein 3 (136 aa).

The 82-residue stretch at 28-109 (MVTVGITSLG…PYDAWIVKIK (82 aa)) folds into the Lipoyl-binding domain. Lys69 carries the N6-lipoyllysine modification.

The protein belongs to the GcvH family. In terms of assembly, the glycine cleavage system is composed of four proteins: P, T, L and H. Requires (R)-lipoate as cofactor.

Functionally, the glycine cleavage system catalyzes the degradation of glycine. The H protein shuttles the methylamine group of glycine from the P protein to the T protein. The chain is Probable glycine cleavage system H protein 3 from Sulfurisphaera tokodaii (strain DSM 16993 / JCM 10545 / NBRC 100140 / 7) (Sulfolobus tokodaii).